The sequence spans 97 residues: Large ribosomal subunit protein uL23 (97 aa).

The protein belongs to the universal ribosomal protein uL23 family. As to quaternary structure, part of the 50S ribosomal subunit. Contacts protein L29, and trigger factor when it is bound to the ribosome.

In terms of biological role, one of the early assembly proteins it binds 23S rRNA. One of the proteins that surrounds the polypeptide exit tunnel on the outside of the ribosome. Forms the main docking site for trigger factor binding to the ribosome. This is Large ribosomal subunit protein uL23 from Mesorhizobium japonicum (strain LMG 29417 / CECT 9101 / MAFF 303099) (Mesorhizobium loti (strain MAFF 303099)).